Here is a 654-residue protein sequence, read N- to C-terminus: Probable potassium transport system protein Kup (654 aa).

13 helical membrane-spanning segments follow: residues 17 to 37 (GILV…LYVM), 40 to 60 (IIGL…AIFW), 71 to 91 (VLIT…LYAL), 99 to 119 (WLII…IITP), 137 to 157 (INTV…QQFG), 164 to 184 (FFAP…ILQI), 202 to 222 (LLSI…CTTG), 240 to 260 (ISWI…GAYL), 281 to 301 (LVMP…AAVI), 338 to 358 (IYIP…VLHF), 369 to 389 (GLAI…FMIL), 394 to 414 (WFII…FLIA), and 423 to 443 (GYVT…WYTA).

This sequence belongs to the HAK/KUP transporter (TC 2.A.72) family.

The protein resides in the cell inner membrane. The enzyme catalyses K(+)(in) + H(+)(in) = K(+)(out) + H(+)(out). Its function is as follows. Transport of potassium into the cell. Likely operates as a K(+):H(+) symporter. The protein is Probable potassium transport system protein Kup of Flavobacterium psychrophilum (strain ATCC 49511 / DSM 21280 / CIP 103535 / JIP02/86).